A 217-amino-acid chain; its full sequence is Insulin-like growth factor 2.L (217 aa).

Residues 1–56 (MEQLSCKHRSSSMEAEAQLCRQTESRSTQLPRMSVMRHLFLLSITFLVYTLDSAKA) form the signal peptide. The interval 57–83 (YRPTETLCGGELVDTLQFVCGDRGFYF) is b. 3 disulfide bridges follow: cysteine 64–cysteine 103, cysteine 76–cysteine 116, and cysteine 102–cysteine 107. Positions 84-96 (STNNGRSNRRSNR) are c. An a region spans residues 97 to 117 (GIVEECCFRSCDLELLETYCA). The interval 118 to 123 (KPSKNE) is d. Positions 124-217 (RDVSTAPATA…LQQTSEPSHN (94 aa)) are cleaved as a propeptide — e peptide.

The protein belongs to the insulin family.

Its subcellular location is the secreted. Its function is as follows. The insulin-like growth factors, isolated from plasma, are structurally and functionally related to insulin but have a much higher growth-promoting activity. Promotes anterior neural development. Acts as a ligand for integrin which is required for IGF2 signaling. The polypeptide is Insulin-like growth factor 2.L (Xenopus laevis (African clawed frog)).